We begin with the raw amino-acid sequence, 117 residues long: Immunoglobulin lambda variable 7-43 (117 aa).

An N-terminal signal peptide occupies residues 1–19 (MAWTPLFLFLLTCCPGSNS). Residues 20–44 (QTVVTQEPSLTVSPGGTVTLTCASS) form a framework-1 region. One can recognise an Ig-like domain in the interval 20–117 (QTVVTQEPSL…YCLLYYGGAQ (98 aa)). A disulfide bridge links C41 with C109. The complementarity-determining-1 stretch occupies residues 45–53 (TGAVTSGYY). The framework-2 stretch occupies residues 54–70 (PNWFQQKPGQAPRALIY). The complementarity-determining-2 stretch occupies residues 71–73 (STS). The tract at residues 74 to 109 (NKHSWTPARFSGSLLGGKAALTLSGVQPEDEAEYYC) is framework-3. The segment at 110 to 117 (LLYYGGAQ) is complementarity-determining-3.

In terms of assembly, immunoglobulins are composed of two identical heavy chains and two identical light chains; disulfide-linked.

Its subcellular location is the secreted. It localises to the cell membrane. In terms of biological role, v region of the variable domain of immunoglobulin light chains that participates in the antigen recognition. Immunoglobulins, also known as antibodies, are membrane-bound or secreted glycoproteins produced by B lymphocytes. In the recognition phase of humoral immunity, the membrane-bound immunoglobulins serve as receptors which, upon binding of a specific antigen, trigger the clonal expansion and differentiation of B lymphocytes into immunoglobulins-secreting plasma cells. Secreted immunoglobulins mediate the effector phase of humoral immunity, which results in the elimination of bound antigens. The antigen binding site is formed by the variable domain of one heavy chain, together with that of its associated light chain. Thus, each immunoglobulin has two antigen binding sites with remarkable affinity for a particular antigen. The variable domains are assembled by a process called V-(D)-J rearrangement and can then be subjected to somatic hypermutations which, after exposure to antigen and selection, allow affinity maturation for a particular antigen. The chain is Immunoglobulin lambda variable 7-43 from Homo sapiens (Human).